We begin with the raw amino-acid sequence, 342 residues long: Probable dual-specificity RNA methyltransferase RlmN (342 aa).

Residue E91 is the Proton acceptor of the active site. In terms of domain architecture, Radical SAM core spans 97-327 (YKHGNSICVS…TTIRREMGAD (231 aa)). The cysteines at positions 104 and 332 are disulfide-linked. Positions 111, 115, and 118 each coordinate [4Fe-4S] cluster. Residues 158 to 159 (GE), S190, 213 to 215 (SLH), and N289 each bind S-adenosyl-L-methionine. C332 functions as the S-methylcysteine intermediate in the catalytic mechanism.

This sequence belongs to the radical SAM superfamily. RlmN family. [4Fe-4S] cluster is required as a cofactor.

The protein localises to the cytoplasm. The catalysed reaction is adenosine(2503) in 23S rRNA + 2 reduced [2Fe-2S]-[ferredoxin] + 2 S-adenosyl-L-methionine = 2-methyladenosine(2503) in 23S rRNA + 5'-deoxyadenosine + L-methionine + 2 oxidized [2Fe-2S]-[ferredoxin] + S-adenosyl-L-homocysteine. It catalyses the reaction adenosine(37) in tRNA + 2 reduced [2Fe-2S]-[ferredoxin] + 2 S-adenosyl-L-methionine = 2-methyladenosine(37) in tRNA + 5'-deoxyadenosine + L-methionine + 2 oxidized [2Fe-2S]-[ferredoxin] + S-adenosyl-L-homocysteine. In terms of biological role, specifically methylates position 2 of adenine 2503 in 23S rRNA and position 2 of adenine 37 in tRNAs. The sequence is that of Probable dual-specificity RNA methyltransferase RlmN from Clostridium botulinum (strain Okra / Type B1).